The following is a 331-amino-acid chain: Phosphoribosylformylglycinamidine cyclo-ligase (331 aa).

The protein belongs to the AIR synthase family.

Its subcellular location is the cytoplasm. The enzyme catalyses 2-formamido-N(1)-(5-O-phospho-beta-D-ribosyl)acetamidine + ATP = 5-amino-1-(5-phospho-beta-D-ribosyl)imidazole + ADP + phosphate + H(+). It participates in purine metabolism; IMP biosynthesis via de novo pathway; 5-amino-1-(5-phospho-D-ribosyl)imidazole from N(2)-formyl-N(1)-(5-phospho-D-ribosyl)glycinamide: step 2/2. This chain is Phosphoribosylformylglycinamidine cyclo-ligase, found in Clostridium botulinum (strain Okra / Type B1).